The sequence spans 154 residues: Myoglobin (154 aa).

A Globin domain is found at 2–148; it reads GLSEAEWQLV…FRKDIAAKYK (147 aa). Residue Ser4 is modified to Phosphoserine. A nitrite-binding site is contributed by His65. His65 provides a ligand contact to O2. The residue at position 68 (Thr68) is a Phosphothreonine. Residue His94 coordinates heme b.

It belongs to the globin family. As to quaternary structure, monomeric.

It is found in the cytoplasm. The protein resides in the sarcoplasm. The enzyme catalyses Fe(III)-heme b-[protein] + nitric oxide + H2O = Fe(II)-heme b-[protein] + nitrite + 2 H(+). The catalysed reaction is H2O2 + AH2 = A + 2 H2O. Functionally, monomeric heme protein which primary function is to store oxygen and facilitate its diffusion within muscle tissues. Reversibly binds oxygen through a pentacoordinated heme iron and enables its timely and efficient release as needed during periods of heightened demand. Depending on the oxidative conditions of tissues and cells, and in addition to its ability to bind oxygen, it also has a nitrite reductase activity whereby it regulates the production of bioactive nitric oxide. Under stress conditions, like hypoxia and anoxia, it also protects cells against reactive oxygen species thanks to its pseudoperoxidase activity. This Mesoplodon carlhubbsi (Hubb's beaked whale) protein is Myoglobin (MB).